A 316-amino-acid polypeptide reads, in one-letter code: Cuticle collagen 13 (316 aa).

Residues 1–36 (MSEDLKQIAQETESLRKVAFFGIAVSTIATLTAIIA) form the signal peptide. Composition is skewed to low complexity over residues 127 to 157 (SGAA…PGQD) and 183 to 204 (APGQ…GAAL). The tract at residues 127–316 (SGAAGPAGSP…CPPPRTAPGY (190 aa)) is disordered. Triple-helical region stretches follow at residues 128–157 (GAAG…PGQD), 176–202 (GPPG…SGGA), 206–235 (GPPG…PGQV), 240–266 (GTPG…AGSS), and 269–304 (GGPG…EGAC). A compositionally biased stretch (pro residues) spans 205-217 (PGPPGPAGPPGPA). Residues 219 to 234 (QPGSNGNAGAPGAPGQ) are compositionally biased toward low complexity. Residues 241-251 (TPGPAGPPGSP) are compositionally biased toward pro residues. Low complexity-rich tracts occupy residues 256 to 266 (APGQPGQAGSS) and 276 to 295 (DAGA…PGQD). Residues 307–316 (CPPPRTAPGY) show a composition bias toward pro residues.

The protein belongs to the cuticular collagen family. As to quaternary structure, collagen polypeptide chains are complexed within the cuticle by disulfide bonds and other types of covalent cross-links.

Functionally, nematode cuticles are composed largely of collagen-like proteins. The cuticle functions both as an exoskeleton and as a barrier to protect the worm from its environment. The polypeptide is Cuticle collagen 13 (col-13) (Caenorhabditis elegans).